Here is a 423-residue protein sequence, read N- to C-terminus: Phthiocerol/phthiodiolone dimycocerosyl transferase (423 aa).

The active-site Proton acceptor is the H125.

This sequence belongs to the acyltransferase PapA5 family. As to quaternary structure, monomer. Interacts directly with the acyl carrier protein (ACP) domain of the mycocerosic acid synthase (mas) protein.

It carries out the reaction 2 a mycocerosyl-[mycocerosic acid synthase] + a phthiocerol = a dimycocerosyl phthiocerol + 2 holo-[mycocerosic acid synthase].. The enzyme catalyses 2 a mycocerosyl-[mycocerosic acid synthase] + a phthiodiolone = a dimycocerosyl phthiodiolone + 2 holo-[mycocerosic acid synthase].. The catalysed reaction is 2 a mycocerosyl-[mycocerosic acid synthase] + a phenolphthiocerol = a dimycocerosyl phenolphthiocerol + 2 holo-[mycocerosic acid synthase].. Catalyzes diesterification of phthiocerol, phthiodiolone, and phenolphthiocerol with mycocerosic acids, the final step in the phthiocerol, phthiodiolone and phenolphthiocerol dimycocerosate esters (PDIM) synthesis. Can directly transfer the mycocerosate bound to the mycocerosic acid synthase (mas) onto the substrate alcohols. The polypeptide is Phthiocerol/phthiodiolone dimycocerosyl transferase (papA5) (Mycobacterium leprae (strain TN)).